The following is a 248-amino-acid chain: Pyridoxine 5'-phosphate synthase (248 aa).

Residue N10 coordinates 3-amino-2-oxopropyl phosphate. 12–13 lines the 1-deoxy-D-xylulose 5-phosphate pocket; it reads DH. A 3-amino-2-oxopropyl phosphate-binding site is contributed by R21. The active-site Proton acceptor is the H46. R48 and H53 together coordinate 1-deoxy-D-xylulose 5-phosphate. E73 acts as the Proton acceptor in catalysis. Position 103 (T103) interacts with 1-deoxy-D-xylulose 5-phosphate. H194 acts as the Proton donor in catalysis. 3-amino-2-oxopropyl phosphate-binding positions include G195 and 216 to 217; that span reads GH.

The protein belongs to the PNP synthase family. Homooctamer; tetramer of dimers.

It is found in the cytoplasm. It carries out the reaction 3-amino-2-oxopropyl phosphate + 1-deoxy-D-xylulose 5-phosphate = pyridoxine 5'-phosphate + phosphate + 2 H2O + H(+). It participates in cofactor biosynthesis; pyridoxine 5'-phosphate biosynthesis; pyridoxine 5'-phosphate from D-erythrose 4-phosphate: step 5/5. Its function is as follows. Catalyzes the complicated ring closure reaction between the two acyclic compounds 1-deoxy-D-xylulose-5-phosphate (DXP) and 3-amino-2-oxopropyl phosphate (1-amino-acetone-3-phosphate or AAP) to form pyridoxine 5'-phosphate (PNP) and inorganic phosphate. In Legionella pneumophila (strain Lens), this protein is Pyridoxine 5'-phosphate synthase.